Consider the following 428-residue polypeptide: E3 ubiquitin-protein ligase RNF128 (428 aa).

The first 38 residues, 1–38 (MGPPPGAGVSCRGGCGFSRLLAWCFLLALSPQAPGSRG), serve as a signal peptide directing secretion. Residues asparagine 48, asparagine 59, and asparagine 101 are each glycosylated (N-linked (GlcNAc...) asparagine). A PA domain is found at 75–183 (SPLEPVAGVL…LKGTKILQSI (109 aa)). The chain crosses the membrane as a helical span at residues 208 to 228 (IFFVSVSFFIITAATVGYFIF). Residues 277–318 (CAVCIELYKPNDLVRILTCNHIFHKTCVDPWLLEHRTCPMCK) form an RING-type; atypical zinc finger. The segment at 346 to 428 (ISNSASSHEE…QETAVREIKS (83 aa)) is disordered. Polar residues predominate over residues 360–371 (ETASSGYASVQG).

In terms of processing, auto-ubiquitinated. Controls the development of T-cell clonal anergy by ubiquitination.

The protein localises to the cytoplasm. It is found in the endomembrane system. It localises to the cytoskeleton. The protein resides in the perinuclear region. It carries out the reaction S-ubiquitinyl-[E2 ubiquitin-conjugating enzyme]-L-cysteine + [acceptor protein]-L-lysine = [E2 ubiquitin-conjugating enzyme]-L-cysteine + N(6)-ubiquitinyl-[acceptor protein]-L-lysine.. The protein operates within protein modification; protein ubiquitination. E3 ubiquitin-protein ligase that catalyzes 'Lys-27', 'Lys-48'- or 'Lys-63'-linked polyubiquitin chains formation and plays a role in different biological processes such as modulation of immune response, cytoskeletal dynamics or protein homeostasis. Inhibits IL2 and IL4 transcription, thereby playing an important role in the induction of the anergic phenotype, a long-term stable state of T-lymphocyte unresponsiveness to antigenic stimulation associated with the blockade of interleukin production. Ubiquitinates ARPC5 with 'Lys-48' linkages and COR1A with 'Lys-63' linkages leading to their degradation, down-regulation of these cytoskeletal components results in impaired lamellipodium formation and reduced accumulation of F-actin at the immunological synapse. Functions in the patterning of the dorsal ectoderm; sensitizes ectoderm to respond to neural-inducing signals. Plays a positive role in innate immune response by promoting 'Lys-63'-linked ubiquitination of TBK1 after RNA- or DNA-virus infection. Regulates alveolar macrophage activation and neutrophil infiltration by interacting with TLR4, targeting it for degradation, and inhibiting NF-kappa-B activation, hence decreasing pro-inflammatory cytokines. Negatively regulates the IL-3/STAT5 signaling pathway by facilitating 'Lys-27'-linked polyubiquitination of IL3RA leading to its degradation via lysosomal pathway. Directly regulates the N-glycosylation process in the endoplasmic reticulum by targeting the glycosyl-transferase RPN1 for ubiquitination and degradation. Other substrates targeted for degradation by RNF128 include transmembrane proteins CD40L, CD83 or the tetraspanin CD151. In Homo sapiens (Human), this protein is E3 ubiquitin-protein ligase RNF128 (RNF128).